The chain runs to 412 residues: Light-independent protochlorophyllide reductase subunit N (412 aa).

3 residues coordinate [4Fe-4S] cluster: Cys16, Cys41, and Cys102.

This sequence belongs to the BchN/ChlN family. Protochlorophyllide reductase is composed of three subunits; ChlL, ChlN and ChlB. Forms a heterotetramer of two ChlB and two ChlN subunits. It depends on [4Fe-4S] cluster as a cofactor.

The enzyme catalyses chlorophyllide a + oxidized 2[4Fe-4S]-[ferredoxin] + 2 ADP + 2 phosphate = protochlorophyllide a + reduced 2[4Fe-4S]-[ferredoxin] + 2 ATP + 2 H2O. Its pathway is porphyrin-containing compound metabolism; chlorophyll biosynthesis (light-independent). In terms of biological role, component of the dark-operative protochlorophyllide reductase (DPOR) that uses Mg-ATP and reduced ferredoxin to reduce ring D of protochlorophyllide (Pchlide) to form chlorophyllide a (Chlide). This reaction is light-independent. The NB-protein (ChlN-ChlB) is the catalytic component of the complex. The sequence is that of Light-independent protochlorophyllide reductase subunit N from Synechococcus sp. (strain RCC307).